Here is a 211-residue protein sequence, read N- to C-terminus: Heat shock 70 kDa protein 4L (211 aa).

The residue at position 161 (Ser-161) is a Phosphoserine.

It belongs to the heat shock protein 70 family. As to quaternary structure, homodimer.

The protein localises to the cytoplasm. It localises to the nucleus. In terms of biological role, possesses chaperone activity in vitro where it inhibits aggregation of citrate synthase. The sequence is that of Heat shock 70 kDa protein 4L from Mesocricetus auratus (Golden hamster).